A 347-amino-acid polypeptide reads, in one-letter code: Dihydroorotate dehydrogenase (quinone) (347 aa).

FMN contacts are provided by residues 61-65 (AGLDK) and T85. K65 is a substrate binding site. Substrate is bound at residue 110–114 (NRMGF). FMN-binding residues include N138 and N171. A substrate-binding site is contributed by N171. The active-site Nucleophile is S174. N176 provides a ligand contact to substrate. K216 and T244 together coordinate FMN. 245–246 (NT) lines the substrate pocket. FMN is bound by residues G267, G296, and 317 to 318 (YT).

The protein belongs to the dihydroorotate dehydrogenase family. Type 2 subfamily. As to quaternary structure, monomer. FMN serves as cofactor.

It localises to the cell membrane. The enzyme catalyses (S)-dihydroorotate + a quinone = orotate + a quinol. The protein operates within pyrimidine metabolism; UMP biosynthesis via de novo pathway; orotate from (S)-dihydroorotate (quinone route): step 1/1. Functionally, catalyzes the conversion of dihydroorotate to orotate with quinone as electron acceptor. This Azotobacter vinelandii (strain DJ / ATCC BAA-1303) protein is Dihydroorotate dehydrogenase (quinone).